Reading from the N-terminus, the 227-residue chain is Cytochrome c oxidase subunit 2 (227 aa).

At 1–26 (MATWSNFNLQNSASPLMEQIIFFHDH) the chain is on the mitochondrial intermembrane side. A helical membrane pass occupies residues 27–51 (TLVILIMITILVGYLMISLFFNSYI). Topologically, residues 52-62 (NRFLLEGQMIE) are mitochondrial matrix. The helical transmembrane segment at 63–81 (LIWTILPAITLIFIALPSL) threads the bilayer. At 82-227 (RLLYLLDELN…NFINWINNYS (146 aa)) the chain is on the mitochondrial intermembrane side. The Cu cation site is built by histidine 161, cysteine 196, glutamate 198, cysteine 200, histidine 204, and methionine 207. Position 198 (glutamate 198) interacts with Mg(2+).

This sequence belongs to the cytochrome c oxidase subunit 2 family. As to quaternary structure, component of the cytochrome c oxidase (complex IV, CIV), a multisubunit enzyme composed of a catalytic core of 3 subunits and several supernumerary subunits. The complex exists as a monomer or a dimer and forms supercomplexes (SCs) in the inner mitochondrial membrane with ubiquinol-cytochrome c oxidoreductase (cytochrome b-c1 complex, complex III, CIII). Cu cation serves as cofactor.

The protein localises to the mitochondrion inner membrane. The enzyme catalyses 4 Fe(II)-[cytochrome c] + O2 + 8 H(+)(in) = 4 Fe(III)-[cytochrome c] + 2 H2O + 4 H(+)(out). In terms of biological role, component of the cytochrome c oxidase, the last enzyme in the mitochondrial electron transport chain which drives oxidative phosphorylation. The respiratory chain contains 3 multisubunit complexes succinate dehydrogenase (complex II, CII), ubiquinol-cytochrome c oxidoreductase (cytochrome b-c1 complex, complex III, CIII) and cytochrome c oxidase (complex IV, CIV), that cooperate to transfer electrons derived from NADH and succinate to molecular oxygen, creating an electrochemical gradient over the inner membrane that drives transmembrane transport and the ATP synthase. Cytochrome c oxidase is the component of the respiratory chain that catalyzes the reduction of oxygen to water. Electrons originating from reduced cytochrome c in the intermembrane space (IMS) are transferred via the dinuclear copper A center (CU(A)) of subunit 2 and heme A of subunit 1 to the active site in subunit 1, a binuclear center (BNC) formed by heme A3 and copper B (CU(B)). The BNC reduces molecular oxygen to 2 water molecules using 4 electrons from cytochrome c in the IMS and 4 protons from the mitochondrial matrix. The chain is Cytochrome c oxidase subunit 2 (COII) from Choristoneura fumiferana (Spruce budworm moth).